The chain runs to 331 residues: Adenosine deaminase (331 aa).

Zn(2+) is bound by residues H12 and H14. H14, D16, and G170 together coordinate substrate. Residue H197 coordinates Zn(2+). The Proton donor role is filled by E200. Position 278 (D278) interacts with Zn(2+).

It belongs to the metallo-dependent hydrolases superfamily. Adenosine and AMP deaminases family. Adenosine deaminase subfamily. Zn(2+) is required as a cofactor.

It carries out the reaction adenosine + H2O + H(+) = inosine + NH4(+). The enzyme catalyses 2'-deoxyadenosine + H2O + H(+) = 2'-deoxyinosine + NH4(+). In terms of biological role, catalyzes the hydrolytic deamination of adenosine and 2-deoxyadenosine. This Vibrio vulnificus (strain CMCP6) protein is Adenosine deaminase.